A 215-amino-acid polypeptide reads, in one-letter code: Probable transaldolase 1 (215 aa).

Lys83 functions as the Schiff-base intermediate with substrate in the catalytic mechanism.

This sequence belongs to the transaldolase family. Type 3B subfamily.

It is found in the cytoplasm. It carries out the reaction D-sedoheptulose 7-phosphate + D-glyceraldehyde 3-phosphate = D-erythrose 4-phosphate + beta-D-fructose 6-phosphate. Its pathway is carbohydrate degradation; pentose phosphate pathway; D-glyceraldehyde 3-phosphate and beta-D-fructose 6-phosphate from D-ribose 5-phosphate and D-xylulose 5-phosphate (non-oxidative stage): step 2/3. Its function is as follows. Transaldolase is important for the balance of metabolites in the pentose-phosphate pathway. The chain is Probable transaldolase 1 from Bacillus anthracis.